The chain runs to 118 residues: Large ribosomal subunit protein uL18 (118 aa).

This sequence belongs to the universal ribosomal protein uL18 family. In terms of assembly, part of the 50S ribosomal subunit; part of the 5S rRNA/L5/L18/L25 subcomplex. Contacts the 5S and 23S rRNAs.

Its function is as follows. This is one of the proteins that bind and probably mediate the attachment of the 5S RNA into the large ribosomal subunit, where it forms part of the central protuberance. The chain is Large ribosomal subunit protein uL18 from Rickettsia akari (strain Hartford).